A 79-amino-acid polypeptide reads, in one-letter code: Probable [Fe-S]-dependent transcriptional repressor (79 aa).

The iron-sulfur cluster site is built by C56, C61, C64, and C70.

Belongs to the FeoC family.

May function as a transcriptional regulator that controls feoABC expression. The chain is Probable [Fe-S]-dependent transcriptional repressor from Serratia proteamaculans (strain 568).